Here is a 331-residue protein sequence, read N- to C-terminus: RNA/RNP complex-1-interacting phosphatase (331 aa).

The region spanning 61–208 (FEKHLAPEEC…LRNGPIRKNW (148 aa)) is the Tyrosine-protein phosphatase domain. Cys-152 functions as the Phosphocysteine intermediate in the catalytic mechanism. Residue 153–158 (THGVNR) participates in substrate binding. Arg-158 functions as the Proton donor/acceptor in the catalytic mechanism.

It belongs to the protein-tyrosine phosphatase family. Non-receptor class dual specificity subfamily. As to quaternary structure, monomer. May interact with SFRS7 and SFRS9/SRP30C.

Its subcellular location is the nucleus. The protein localises to the nucleus speckle. Possesses RNA 5'-triphosphatase and diphosphatase activities, but displays a poor protein-tyrosine phosphatase activity. In addition, has phosphatase activity with ATP, ADP and O-methylfluorescein phosphate (in vitro). Binds to RNA. May participate in nuclear mRNA metabolism. This Bos taurus (Bovine) protein is RNA/RNP complex-1-interacting phosphatase (DUSP11).